Consider the following 65-residue polypeptide: Photosystem II reaction center protein J (65 aa).

Residues 35 to 55 (LWLVATAGGTAVIFVLGIFFY) traverse the membrane as a helical segment.

The protein belongs to the PsbJ family. As to quaternary structure, PSII is composed of 1 copy each of membrane proteins PsbA, PsbB, PsbC, PsbD, PsbE, PsbF, PsbH, PsbI, PsbJ, PsbK, PsbL, PsbM, PsbT, PsbX, PsbY, Psb30/Ycf12, peripheral proteins PsbO, CyanoQ (PsbQ), PsbU, PsbV and a large number of cofactors. It forms dimeric complexes.

The protein resides in the cellular thylakoid membrane. Functionally, one of the components of the core complex of photosystem II (PSII). PSII is a light-driven water:plastoquinone oxidoreductase that uses light energy to abstract electrons from H(2)O, generating O(2) and a proton gradient subsequently used for ATP formation. It consists of a core antenna complex that captures photons, and an electron transfer chain that converts photonic excitation into a charge separation. This is Photosystem II reaction center protein J from Prochlorococcus marinus (strain NATL2A).